A 376-amino-acid chain; its full sequence is Glutamate 5-kinase (376 aa).

Position 15 (K15) interacts with ATP. Substrate-binding residues include S56, D143, and N155. 175-176 serves as a coordination point for ATP; sequence SD. A PUA domain is found at 281–358; it reads KGTLTIDAGA…PDVMSILGVS (78 aa).

The protein belongs to the glutamate 5-kinase family.

Its subcellular location is the cytoplasm. It catalyses the reaction L-glutamate + ATP = L-glutamyl 5-phosphate + ADP. It functions in the pathway amino-acid biosynthesis; L-proline biosynthesis; L-glutamate 5-semialdehyde from L-glutamate: step 1/2. Functionally, catalyzes the transfer of a phosphate group to glutamate to form L-glutamate 5-phosphate. The sequence is that of Glutamate 5-kinase from Rhodopseudomonas palustris (strain HaA2).